A 378-amino-acid chain; its full sequence is Probable cytochrome oxidase subunit 2 (378 aa).

Residues 1–8 lie on the Cytoplasmic side of the membrane; the sequence is MIDYEFLR. Residues 9-28 form a helical membrane-spanning segment; the sequence is FIWWVLVIVLLIGFSVTDGF. Topologically, residues 29–79 are periplasmic; that stretch reads DMGVTALLPVIGKKEVERRIMINTIAPHWDGNQVWLLTAGGAIFAAWPIVY. Residues 80–99 form a helical membrane-spanning segment; the sequence is AVSFSGFYIALVLVLAALFL. Residues 100–122 are Cytoplasmic-facing; that stretch reads RPLGFEYRAKIDNPTWRSVWDWG. The helical transmembrane segment at 123-142 threads the bilayer; that stretch reads LFAGGFVPALVFGVAFGNLL. Over 143–164 the chain is Periplasmic; sequence QGVPFHFNELTQVTYTGSFFEL. A helical membrane pass occupies residues 165 to 184; it reads LNPFALLCGVISLSMLVTHG. The Cytoplasmic portion of the chain corresponds to 185 to 205; the sequence is ANWLQMKTTEALRDRARTVSQ. Residues 206–224 form a helical membrane-spanning segment; that stretch reads IGSIVTLIAFVLAGVWLYS. Over 225 to 261 the chain is Periplasmic; that stretch reads KDGYVVTSTIDHFAPSSPMNKEVAVETGAWFRNFNEM. A helical transmembrane segment spans residues 262–281; the sequence is PILWIFPALAVVAALLNAAF. The Cytoplasmic portion of the chain corresponds to 282–291; the sequence is SKANRCGFAF. The chain crosses the membrane as a helical span at residues 292 to 311; that stretch reads FFSALTMAGVIITAAVSMFP. Residues 312-335 are Periplasmic-facing; it reads FVMPSSSHPEQSLLMWDSTSSELT. Residues 336–355 traverse the membrane as a helical segment; sequence LTLMLIFAVVFVVIALAYTI. At 356–378 the chain is on the cytoplasmic side; it reads WSYSKMFGRLDANFIDKNKHSLY.

Belongs to the cytochrome ubiquinol oxidase subunit 2 family. As to quaternary structure, heterodimer of subunits I and II.

The protein resides in the cell inner membrane. Functionally, probable cytochrome oxidase subunit. The sequence is that of Probable cytochrome oxidase subunit 2 from Haemophilus influenzae (strain ATCC 51907 / DSM 11121 / KW20 / Rd).